Reading from the N-terminus, the 410-residue chain is D-3-phosphoglycerate dehydrogenase (410 aa).

Residues 162 to 163 (HI), aspartate 182, 239 to 241 (AAR), and aspartate 265 each bind NAD(+). Arginine 241 is an active-site residue. Glutamate 270 is an active-site residue. Histidine 293 serves as the catalytic Proton donor. 293-296 (HIGG) contacts NAD(+). The ACT domain maps to 341–410 (RLLHIHENRP…DGTIRARVLY (70 aa)).

The protein belongs to the D-isomer specific 2-hydroxyacid dehydrogenase family.

The enzyme catalyses (2R)-3-phosphoglycerate + NAD(+) = 3-phosphooxypyruvate + NADH + H(+). The catalysed reaction is (R)-2-hydroxyglutarate + NAD(+) = 2-oxoglutarate + NADH + H(+). The protein operates within amino-acid biosynthesis; L-serine biosynthesis; L-serine from 3-phospho-D-glycerate: step 1/3. Its activity is regulated as follows. In bacteria displays feedback inhibition by L-serine. Catalyzes the reversible oxidation of 3-phospho-D-glycerate to 3-phosphonooxypyruvate, the first step of the phosphorylated L-serine biosynthesis pathway. Also catalyzes the reversible oxidation of 2-hydroxyglutarate to 2-oxoglutarate. The sequence is that of D-3-phosphoglycerate dehydrogenase (serA) from Haemophilus influenzae (strain ATCC 51907 / DSM 11121 / KW20 / Rd).